The sequence spans 282 residues: Undecaprenyl-diphosphatase (282 aa).

The next 8 membrane-spanning stretches (helical) occupy residues 1 to 21, 39 to 59, 85 to 105, 115 to 135, 153 to 173, 193 to 213, 229 to 249, and 259 to 279; these read MTLI…FLPI, PGAA…MLYF, AKMG…GLLF, SLYW…LAEW, IGWK…IPGS, AARF…AFEL, NLAV…AFLL, and IFIA…GGGT.

It belongs to the UppP family.

The protein localises to the cell inner membrane. The enzyme catalyses di-trans,octa-cis-undecaprenyl diphosphate + H2O = di-trans,octa-cis-undecaprenyl phosphate + phosphate + H(+). Catalyzes the dephosphorylation of undecaprenyl diphosphate (UPP). Confers resistance to bacitracin. The protein is Undecaprenyl-diphosphatase of Chlorobium luteolum (strain DSM 273 / BCRC 81028 / 2530) (Pelodictyon luteolum).